The following is a 321-amino-acid chain: Lipoyl synthase (321 aa).

Cysteine 68, cysteine 73, cysteine 79, cysteine 94, cysteine 98, cysteine 101, and serine 308 together coordinate [4Fe-4S] cluster. One can recognise a Radical SAM core domain in the interval 80-297 (FNHGTATFMI…KAIALDLGFT (218 aa)).

It belongs to the radical SAM superfamily. Lipoyl synthase family. It depends on [4Fe-4S] cluster as a cofactor.

It is found in the cytoplasm. It catalyses the reaction [[Fe-S] cluster scaffold protein carrying a second [4Fe-4S](2+) cluster] + N(6)-octanoyl-L-lysyl-[protein] + 2 oxidized [2Fe-2S]-[ferredoxin] + 2 S-adenosyl-L-methionine + 4 H(+) = [[Fe-S] cluster scaffold protein] + N(6)-[(R)-dihydrolipoyl]-L-lysyl-[protein] + 4 Fe(3+) + 2 hydrogen sulfide + 2 5'-deoxyadenosine + 2 L-methionine + 2 reduced [2Fe-2S]-[ferredoxin]. It participates in protein modification; protein lipoylation via endogenous pathway; protein N(6)-(lipoyl)lysine from octanoyl-[acyl-carrier-protein]: step 2/2. Functionally, catalyzes the radical-mediated insertion of two sulfur atoms into the C-6 and C-8 positions of the octanoyl moiety bound to the lipoyl domains of lipoate-dependent enzymes, thereby converting the octanoylated domains into lipoylated derivatives. This is Lipoyl synthase from Tolumonas auensis (strain DSM 9187 / NBRC 110442 / TA 4).